Reading from the N-terminus, the 385-residue chain is Tryptophan--tRNA ligase (385 aa).

The 'HIGH' region motif lies at 82 to 90 (PSGPMHIGH). Positions 253–257 (KMSAS) match the 'KMSKS' region motif.

It belongs to the class-I aminoacyl-tRNA synthetase family.

The protein localises to the cytoplasm. It catalyses the reaction tRNA(Trp) + L-tryptophan + ATP = L-tryptophyl-tRNA(Trp) + AMP + diphosphate + H(+). In Pyrococcus furiosus (strain ATCC 43587 / DSM 3638 / JCM 8422 / Vc1), this protein is Tryptophan--tRNA ligase.